A 21-amino-acid chain; its full sequence is Agglutinin beta-1 chain (21 aa).

Residues 1-10 (NGPNGKSQSI) are compositionally biased toward polar residues. Residues 1-21 (NGPNGKSQSIIVGPWGDRVTN) are disordered.

Belongs to the jacalin lectin family. Formed of four alpha chains and four beta chains.

D-galactose-specific lectin, binds the T-antigen structure Gal-beta1,3-GalNAc. In Maclura pomifera (Osage orange), this protein is Agglutinin beta-1 chain.